Reading from the N-terminus, the 229-residue chain is Putative N-acetylmannosamine-6-phosphate 2-epimerase (229 aa).

It belongs to the NanE family.

It catalyses the reaction an N-acyl-D-glucosamine 6-phosphate = an N-acyl-D-mannosamine 6-phosphate. Its pathway is amino-sugar metabolism; N-acetylneuraminate degradation; D-fructose 6-phosphate from N-acetylneuraminate: step 3/5. Converts N-acetylmannosamine-6-phosphate (ManNAc-6-P) to N-acetylglucosamine-6-phosphate (GlcNAc-6-P). This Escherichia fergusonii (strain ATCC 35469 / DSM 13698 / CCUG 18766 / IAM 14443 / JCM 21226 / LMG 7866 / NBRC 102419 / NCTC 12128 / CDC 0568-73) protein is Putative N-acetylmannosamine-6-phosphate 2-epimerase.